The chain runs to 259 residues: Putative protein-disulfide oxidoreductase RBE_1288 (259 aa).

Positions 1–20 are cleaved as a signal peptide; sequence MRNSFITLIFLLLLSGCSEE. The interval 25 to 54 is disordered; sequence VEQESSESITPAQASTSDENNNQTTETTTP. The segment covering 33–42 has biased composition (polar residues); it reads ITPAQASTSD. Low complexity predominate over residues 43–54; that stretch reads ENNNQTTETTTP. The 205-residue stretch at 47–251 folds into the Thioredoxin domain; the sequence is QTTETTTPAV…ISAAIDKAIE (205 aa). The cysteines at positions 104 and 107 are disulfide-linked.

It belongs to the thioredoxin family. DsbA subfamily.

It localises to the periplasm. May be required for disulfide bond formation in some proteins. The chain is Putative protein-disulfide oxidoreductase RBE_1288 from Rickettsia bellii (strain RML369-C).